The sequence spans 49 residues: Large ribosomal subunit protein bL33 (49 aa).

This sequence belongs to the bacterial ribosomal protein bL33 family.

This chain is Large ribosomal subunit protein bL33, found in Lachnoclostridium phytofermentans (strain ATCC 700394 / DSM 18823 / ISDg) (Clostridium phytofermentans).